The sequence spans 107 residues: Inner membrane protein YgbE (107 aa).

Residues 1-20 are Cytoplasmic-facing; that stretch reads MRNSHNITLTNNDSLTEDEE. A helical membrane pass occupies residues 21 to 43; it reads TTWSLPGAVVGFISWLFALAMPM. Topologically, residues 44–52 are periplasmic; that stretch reads LIYGSNTLF. The chain crosses the membrane as a helical span at residues 53 to 75; it reads FFIYTWPFFLALMPVAVVVGIAL. Residues 76–86 are Cytoplasmic-facing; the sequence is HSLMDGKLRYS. Residues 87-106 form a helical membrane-spanning segment; sequence IVFTLVTVGIMFGALFMWLL. A topological domain (periplasmic) is located at residue Gly107.

Its subcellular location is the cell inner membrane. In Escherichia coli (strain K12), this protein is Inner membrane protein YgbE (ygbE).